Reading from the N-terminus, the 199-residue chain is Proteasome subunit beta type-2 (199 aa).

The protein belongs to the peptidase T1B family. As to quaternary structure, the 26S proteasome consists of a 20S proteasome core and two 19S regulatory subunits. The 20S proteasome core is composed of 28 subunits that are arranged in four stacked rings, resulting in a barrel-shaped structure. The two end rings are each formed by seven alpha subunits, and the two central rings are each formed by seven beta subunits. The catalytic chamber with the active sites is on the inside of the barrel.

It is found in the cytoplasm. Its subcellular location is the nucleus. Functionally, non-catalytic component of the proteasome, a multicatalytic proteinase complex which is characterized by its ability to cleave peptides with Arg, Phe, Tyr, Leu, and Glu adjacent to the leaving group at neutral or slightly basic pH. The proteasome has an ATP-dependent proteolytic activity. The polypeptide is Proteasome subunit beta type-2 (pbs-4) (Caenorhabditis elegans).